The following is a 221-amino-acid chain: PKHD-type hydroxylase P9215_13741 (221 aa).

Residues R80 to S174 enclose the Fe2OG dioxygenase domain. The Fe cation site is built by H98, D100, and H155. R165 contacts 2-oxoglutarate.

Fe(2+) serves as cofactor. It depends on L-ascorbate as a cofactor.

This is PKHD-type hydroxylase P9215_13741 from Prochlorococcus marinus (strain MIT 9215).